Here is a 59-residue protein sequence, read N- to C-terminus: Cecropin-A (59 aa).

An N-terminal signal peptide occupies residues 1-23 (MNFTKLFLLIAMAVLLLTGQSEA). Positions 58-59 (GK) are cleaved as a propeptide — removed in mature form (AeaeCec2).

In terms of tissue distribution, hemolymph (at protein level).

It localises to the secreted. In terms of biological role, antimicrobial peptide. Antibacterial activity against Gram-negative bacteria E.coli D22 and D31, E.carotovora, K.pneumoniae, P.aeruginosa, S.typhimurium, E.cloacae B12 and X.campestris and Gram-positive bacteria A.viridans, M.luteus, B.megaterium and S.pyogenes. Possesses antifungal activity against F.oxysporum, F.culmorum and N.crassa, C.albicans, C.neoformans and S.cerevisiae. No activity against Gram-negative S.marcescens Db11, Gram-positive B.cereus, B.subtilis, B.thuringiensis, S.aureus and L.monocytogenes, the fungi A.fumigatus and B.bassiana and C.glabrata. Partially neutralizes lipopolysaccharides (LPS). Exhibits anti-inflammatory properties: inhibits LPS-induced iNOS/NOS2 transcription, nitric oxide (NO) and pro-inflammatory cytokine production in mouse macrophages and human peripheral blood mononuclear cells (PBMCs); inhibits LPS-induced activation of MAPK and NF-kappa-B signaling pathways in mouse macrophages. The protein is Cecropin-A (CECA) of Aedes aegypti (Yellowfever mosquito).